Reading from the N-terminus, the 248-residue chain is MANQRKFFVGGNWKMNGDRAGIDSIISFMKGPLSADTEVVVGCPQCYLMYTREHLPSNIGVAAQNCYKVAKGAFTGEISPSMIKDCGCEWVILGHSERRNVFNEPDTLISEKVGHALEAGLKVIPCIGEKLEERESNRTEEVVFAQMKALVPNISDWSRVVIAYEPVWAIGTGKTATPEQAQEVHAKLRQWLRDNVNAEVADSTRIIYGGSVTPGNCKELAKTGDIDGFLVGGASLKPDFVQIINARD.

Residues Asn-12 and Lys-14 each coordinate substrate. The tract at residues 16 to 30 (NGDRAGIDSIISFMK) is igE-binding. Catalysis depends on His-95, which acts as the Electrophile. Residue Glu-165 is the Proton acceptor of the active site. IgE-binding stretches follow at residues 166-180 (PVWA…TPEQ) and 205-219 (RIIY…NCKE).

The protein belongs to the triosephosphate isomerase family. As to quaternary structure, homodimer. Expressed in skeletal muscle (at protein level).

It is found in the cytoplasm. The enzyme catalyses D-glyceraldehyde 3-phosphate = dihydroxyacetone phosphate. It catalyses the reaction dihydroxyacetone phosphate = methylglyoxal + phosphate. It functions in the pathway carbohydrate biosynthesis; gluconeogenesis. Its pathway is carbohydrate degradation; glycolysis; D-glyceraldehyde 3-phosphate from glycerone phosphate: step 1/1. Functionally, triosephosphate isomerase is an extremely efficient metabolic enzyme that catalyzes the interconversion between dihydroxyacetone phosphate (DHAP) and D-glyceraldehyde-3-phosphate (G3P) in glycolysis and gluconeogenesis. Its function is as follows. It is also responsible for the non-negligible production of methylglyoxal a reactive cytotoxic side-product that modifies and can alter proteins, DNA and lipids. This Procambarus clarkii (Red swamp crayfish) protein is Triosephosphate isomerase.